A 751-amino-acid polypeptide reads, in one-letter code: WD repeat-containing protein 91 (751 aa).

Residues I188–E212 are a coiled coil. Residues L264–R395 form a disordered region. The span at S278–S287 shows a compositional bias: polar residues. The span at R334–L346 shows a compositional bias: basic and acidic residues. Polar residues predominate over residues Q377 to S391. WD repeat units lie at residues E410–A449, I452–E492, E497–Q559, P564–S603, A606–S645, V668–E706, and G713–S751.

Belongs to the WD repeat WDR91 family.

The protein resides in the early endosome membrane. The protein localises to the late endosome membrane. Its function is as follows. Functions as a negative regulator of the PI3 kinase/PI3K activity associated with endosomal membranes. By modifying the phosphatidylinositol 3-phosphate/PtdInsP3 content of endosomal membranes may regulate endosome fusion, recycling, sorting and early to late endosome transport. This chain is WD repeat-containing protein 91, found in Gallus gallus (Chicken).